The following is a 266-amino-acid chain: Gasdermin bGSDM (266 aa).

Cys4 carries the S-palmitoyl cysteine lipid modification. 4 beta stranded membrane passes run 69-85 (INGQKTENLSFSIGINI), 97-114 (AGIEAQYNQARKVRFEFS), 163-180 (EFTVAAEKSGGGSIQLDV), and 189-205 (GKLKVEASVSSQSTVTY). Residues 238-266 (AMALDAAGGVMPSDSALLDEGGLLDLEGF) form a C-terminal region region.

This sequence belongs to the bacterial gasdermin family. Monomer in solution. In terms of assembly, homooligomer; forms homooligomeric ring-shaped pores when inserted in membranes with 48-54 subunits per ring. In terms of processing, palmitoylation helps stabilize the inactive state; may self palmitoylate. Palmitoylation plays a significant role in pore formation.

The protein localises to the cytoplasm. It localises to the cell inner membrane. Its activity is regulated as follows. The full-length protein before cleavage is inactive: intramolecular interactions between the N-terminal domain and the C-terminal region as well as the lipid modification, mediate autoinhibition. The pyroptosis-like-inducing activity is carried by the released N-terminal domain (Gasdermin bGSDM, N-terminus). Its function is as follows. Precursor of a pore-forming protein involved in defense against bacteriophages. Expression of bGSDM and the neighboring protease gene (Ga0334635_1659) is toxic in E.coli. Cleavage of this precursor by its dedicated protease releases the active moiety (gasdermin bGSDM, N-terminus) which inserts into membranes, forming pores and triggering cell death. Functionally, pore-forming protein that causes membrane permeabilization, probably via a pyroptosis-like activity. Makes ring-like pores with an interior pore diameter of 200-300 Angstroms, when integrated in liposomes. In Vitiosangium sp. (strain GDMCC 1.1324), this protein is Gasdermin bGSDM.